The primary structure comprises 158 residues: MMKHMHIKIKKLHSHAVIPSYQTPQAAGFDLHAVEDSLIKARDRGLVGTGLAFEIESGFEVQVRPRSGLALHNGVSVLNTPGTIDSDYRGEIKVILINHSNEDFHIHRGDRIAQAVVSEVTQAVFTEVQELGQSVRGERGFGSSGVARKGHYQGKPLA.

Substrate-binding positions include 66–68 (RSG), Asn-79, 83–85 (TID), and Lys-93. Residues 139-158 (RGFGSSGVARKGHYQGKPLA) form a disordered region.

This sequence belongs to the dUTPase family. Mg(2+) serves as cofactor.

It carries out the reaction dUTP + H2O = dUMP + diphosphate + H(+). It participates in pyrimidine metabolism; dUMP biosynthesis; dUMP from dCTP (dUTP route): step 2/2. Functionally, this enzyme is involved in nucleotide metabolism: it produces dUMP, the immediate precursor of thymidine nucleotides and it decreases the intracellular concentration of dUTP so that uracil cannot be incorporated into DNA. The polypeptide is Deoxyuridine 5'-triphosphate nucleotidohydrolase (Helicobacter hepaticus (strain ATCC 51449 / 3B1)).